The following is a 667-amino-acid chain: DNA ligase (667 aa).

NAD(+)-binding positions include 32–36, 81–82, and E110; these read DSEYD and SL. The active-site N6-AMP-lysine intermediate is K112. Residues R133, E167, K283, and K307 each contribute to the NAD(+) site. Zn(2+) contacts are provided by C401, C404, C419, and C424. The BRCT domain maps to 586 to 667; it reads EGHPDFKDKT…FVQKQNEIEG (82 aa).

The protein belongs to the NAD-dependent DNA ligase family. LigA subfamily. It depends on Mg(2+) as a cofactor. Mn(2+) is required as a cofactor.

It carries out the reaction NAD(+) + (deoxyribonucleotide)n-3'-hydroxyl + 5'-phospho-(deoxyribonucleotide)m = (deoxyribonucleotide)n+m + AMP + beta-nicotinamide D-nucleotide.. Functionally, DNA ligase that catalyzes the formation of phosphodiester linkages between 5'-phosphoryl and 3'-hydroxyl groups in double-stranded DNA using NAD as a coenzyme and as the energy source for the reaction. It is essential for DNA replication and repair of damaged DNA. This chain is DNA ligase, found in Staphylococcus saprophyticus subsp. saprophyticus (strain ATCC 15305 / DSM 20229 / NCIMB 8711 / NCTC 7292 / S-41).